The primary structure comprises 806 residues: GPI ethanolamine phosphate transferase 2 (806 aa).

N-linked (GlcNAc...) asparagine glycans are attached at residues N70, N184, and N242. The next 3 membrane-spanning stretches (helical) occupy residues 396–416 (MLFLGVGMLSIVTAATAYCYI), 425–445 (SVLMIAVTALLGSSVFGSSFV), and 451–471 (IWWWIIIAVVGYSWATRPSCT). An N-linked (GlcNAc...) asparagine glycan is attached at N488. The next 8 membrane-spanning stretches (helical) occupy residues 508–528 (PSIKWLLVCATLAVVALDGFT), 532–552 (LLSIFNLLAGLLCFVYKTCWA), 593–613 (LFFKVTAAIVCMRIAYNVVFA), 624–644 (LFTIVLIMQTASQNIPLFLVF), 664–684 (CEMFFVLSLILQNLSFFQFGG), 706–726 (IYVVGLLMCIGNMAPAIYWSL), 745–765 (LSSMFFYSVNSLLLLVACICM), and 782–804 (LLGWNILIHFLTETVLEPFLLMV).

Belongs to the PIGG/PIGN/PIGO family. PIGG subfamily.

It is found in the endoplasmic reticulum membrane. It participates in glycolipid biosynthesis; glycosylphosphatidylinositol-anchor biosynthesis. Functionally, ethanolamine phosphate transferase involved in glycosylphosphatidylinositol-anchor biosynthesis. Transfers ethanolamine phosphate to the GPI second mannose. In Eremothecium gossypii (strain ATCC 10895 / CBS 109.51 / FGSC 9923 / NRRL Y-1056) (Yeast), this protein is GPI ethanolamine phosphate transferase 2 (LAS21).